The primary structure comprises 171 residues: Ferritin heavy chain (171 aa).

Position 1 is an N-acetylmethionine (Met1). Residue Thr2 is modified to N-acetylthreonine; in Ferritin heavy chain, N-terminally processed. In terms of domain architecture, Ferritin-like diiron spans 11–160 (QNYHQDSEAA…DHITNLRKMG (150 aa)). Fe cation contacts are provided by Glu28, Glu63, His66, Glu108, and Gln142.

This sequence belongs to the ferritin family. Oligomer of 24 subunits. There are two types of subunits: L (light) chain and H (heavy) chain. The major chain can be light or heavy, depending on the species and tissue type. The functional molecule forms a roughly spherical shell with a diameter of 12 nm and contains a central cavity into which the insoluble mineral iron core is deposited. Interacts with NCOA4; NCOA4 promotes targeting of the iron-binding ferritin complex to autolysosomes following starvation or iron depletion.

It localises to the cytoplasm. The protein localises to the lysosome. Its subcellular location is the cytoplasmic vesicle. It is found in the autophagosome. It carries out the reaction 4 Fe(2+) + O2 + 4 H(+) = 4 Fe(3+) + 2 H2O. Stores iron in a soluble, non-toxic, readily available form. Important for iron homeostasis. Has ferroxidase activity. Iron is taken up in the ferrous form and deposited as ferric hydroxides after oxidation. Also plays a role in delivery of iron to cells. Mediates iron uptake in capsule cells of the developing kidney. Delivery to lysosomes is mediated by the cargo receptor NCOA4 for autophagic degradation and release of iron. In Ovis aries (Sheep), this protein is Ferritin heavy chain (FTH1).